The primary structure comprises 44 residues: MTTRNPNQPVSYPIFTVRWIAVHTLAVPSVFFLGAIAAMQFIHR.

The chain crosses the membrane as a helical span at residues 19–35 (WIAVHTLAVPSVFFLGA). Position 23 (histidine 23) interacts with heme.

The protein belongs to the PsbE/PsbF family. Heterodimer of an alpha subunit and a beta subunit. PSII is composed of 1 copy each of membrane proteins PsbA, PsbB, PsbC, PsbD, PsbE, PsbF, PsbH, PsbI, PsbJ, PsbK, PsbL, PsbM, PsbT, PsbX, PsbY, PsbZ, Psb30/Ycf12, peripheral proteins PsbO, CyanoQ (PsbQ), PsbU, PsbV and a large number of cofactors. It forms dimeric complexes. The cofactor is heme b.

The protein localises to the cellular thylakoid membrane. This b-type cytochrome is tightly associated with the reaction center of photosystem II (PSII). PSII is a light-driven water:plastoquinone oxidoreductase that uses light energy to abstract electrons from H(2)O, generating O(2) and a proton gradient subsequently used for ATP formation. It consists of a core antenna complex that captures photons, and an electron transfer chain that converts photonic excitation into a charge separation. The protein is Cytochrome b559 subunit beta of Cyanothece sp. (strain PCC 7425 / ATCC 29141).